We begin with the raw amino-acid sequence, 118 residues long: Large ribosomal subunit protein uL22 (118 aa).

It belongs to the universal ribosomal protein uL22 family. In terms of assembly, part of the 50S ribosomal subunit.

This protein binds specifically to 23S rRNA; its binding is stimulated by other ribosomal proteins, e.g. L4, L17, and L20. It is important during the early stages of 50S assembly. It makes multiple contacts with different domains of the 23S rRNA in the assembled 50S subunit and ribosome. Functionally, the globular domain of the protein is located near the polypeptide exit tunnel on the outside of the subunit, while an extended beta-hairpin is found that lines the wall of the exit tunnel in the center of the 70S ribosome. This is Large ribosomal subunit protein uL22 from Treponema denticola (strain ATCC 35405 / DSM 14222 / CIP 103919 / JCM 8153 / KCTC 15104).